Here is a 359-residue protein sequence, read N- to C-terminus: Methionine import ATP-binding protein MetN (359 aa).

Residues methionine 1 to glycine 21 are disordered. The region spanning valine 24 to valine 264 is the ABC transporter domain. Position 61-68 (glycine 61–serine 68) interacts with ATP.

Belongs to the ABC transporter superfamily. Methionine importer (TC 3.A.1.24) family. As to quaternary structure, the complex is composed of two ATP-binding proteins (MetN), two transmembrane proteins (MetI) and a solute-binding protein (MetQ).

The protein resides in the cell membrane. It carries out the reaction L-methionine(out) + ATP + H2O = L-methionine(in) + ADP + phosphate + H(+). It catalyses the reaction D-methionine(out) + ATP + H2O = D-methionine(in) + ADP + phosphate + H(+). Its function is as follows. Part of the ABC transporter complex MetNIQ involved in methionine import. Responsible for energy coupling to the transport system. The sequence is that of Methionine import ATP-binding protein MetN from Corynebacterium efficiens (strain DSM 44549 / YS-314 / AJ 12310 / JCM 11189 / NBRC 100395).